A 258-amino-acid polypeptide reads, in one-letter code: Trifolitoxin-processing protein TfxF (258 aa).

In terms of biological role, the actions of the proteins TfxB, TfxD and TfxF are implicated in the processing of the inactive trifolitoxin (TfxA) precursor into the active peptide. The polypeptide is Trifolitoxin-processing protein TfxF (tfxF) (Rhizobium leguminosarum bv. trifolii).